Here is a 221-residue protein sequence, read N- to C-terminus: Large ribosomal subunit protein uL4 (221 aa).

A disordered region spans residues 56-83 (HATKTRGMVSGGGRKPWKQKGTGRARQG).

The protein belongs to the universal ribosomal protein uL4 family. As to quaternary structure, part of the 50S ribosomal subunit.

Its function is as follows. One of the primary rRNA binding proteins, this protein initially binds near the 5'-end of the 23S rRNA. It is important during the early stages of 50S assembly. It makes multiple contacts with different domains of the 23S rRNA in the assembled 50S subunit and ribosome. In terms of biological role, forms part of the polypeptide exit tunnel. The chain is Large ribosomal subunit protein uL4 from Bifidobacterium adolescentis (strain ATCC 15703 / DSM 20083 / NCTC 11814 / E194a).